A 414-amino-acid chain; its full sequence is TAR DNA-binding protein 43 (414 aa).

Residues lysine 79, lysine 84, lysine 95, lysine 102, and lysine 181 each participate in a glycyl lysine isopeptide (Lys-Gly) (interchain with G-Cter in SUMO2) cross-link. The Nuclear localization signal motif lies at 82 to 98; the sequence is KRKMDETDASSAVKVKR. RRM domains follow at residues 104-200 and 191-262; these read SDLI…RCTE and RKVF…NAEP. At serine 183 the chain carries Phosphoserine. Residues 216 to 414 are interaction with UBQLN2; it reads DVMDVFIPKP…MDSKSSGWGM (199 aa). A Nuclear export signal motif is present at residues 239–250; the sequence is IAQSLCGEDLII. The segment covering 261–274 has biased composition (basic and acidic residues); the sequence is EPKHNSNRQLERSG. Disordered regions lie at residues 261-303 and 341-373; these read EPKH…GNNQ and ASQQ…GNNS. Lysine 263 is covalently cross-linked (Glycyl lysine isopeptide (Lys-Gly) (interchain with G-Cter in SUMO2)). The segment covering 275-303 has biased composition (gly residues); it reads RFGGNPGGFGNQGGFGNSRGGGAGLGNNQ. At serine 292 the chain carries Phosphoserine. Arginine 293 carries the post-translational modification Omega-N-methylarginine. Over residues 342-358 the composition is skewed to low complexity; the sequence is SQQNQSGPSGNNQNQGN.

As to quaternary structure, homodimer. Homooligomer (via its N-terminal domain). Interacts with BRDT. Binds specifically to pyrimidine-rich motifs of TAR DNA and to single stranded TG repeated sequences. Binds to RNA, specifically to UG repeated sequences with a minimum of six contiguous repeats. Interacts with ATXN2; the interaction is RNA-dependent. Interacts with MATR3. Interacts with UBQLN2. Interacts with HNRNPA2B1. Interacts with ZNF106. Interacts with CNOT7/CAF1. Interacts with CRY2. Interacts with PPIA/CYPA; the interaction is dependent on RNA-binding activity of TARDBP and PPIase activity of PPIA/CYPA and acetylation of PPIA/CYPA at 'Lys-125' favors the interaction. Hyperphosphorylated in hippocampus, neocortex, and spinal cord from individuals affected with ALS and FTLDU. Phosphorylated upon cellular stress. Post-translationally, ubiquitinated in hippocampus, neocortex, and spinal cord from individuals affected with ALS and FTLDU. In terms of processing, cleaved to generate C-terminal fragments in hippocampus, neocortex, and spinal cord from individuals affected with ALS and FTLDU. As to expression, ubiquitously expressed. In particular, expression is high in pancreas, placenta, lung, genital tract and spleen.

It is found in the nucleus. The protein resides in the cytoplasm. Its subcellular location is the stress granule. The protein localises to the mitochondrion. Its function is as follows. RNA-binding protein that is involved in various steps of RNA biogenesis and processing. Preferentially binds, via its two RNA recognition motifs RRM1 and RRM2, to GU-repeats on RNA molecules predominantly localized within long introns and in the 3'UTR of mRNAs. In turn, regulates the splicing of many non-coding and protein-coding RNAs including proteins involved in neuronal survival, as well as mRNAs that encode proteins relevant for neurodegenerative diseases. Plays a role in maintaining mitochondrial homeostasis by regulating the processing of mitochondrial transcripts. Also regulates mRNA stability by recruiting CNOT7/CAF1 deadenylase on mRNA 3'UTR leading to poly(A) tail deadenylation and thus shortening. In response to oxidative insult, associates with stalled ribosomes localized to stress granules (SGs) and contributes to cell survival. Also participates in the normal skeletal muscle formation and regeneration, forming cytoplasmic myo-granules and binding mRNAs that encode sarcomeric proteins. Plays a role in the maintenance of the circadian clock periodicity via stabilization of the CRY1 and CRY2 proteins in a FBXL3-dependent manner. Negatively regulates the expression of CDK6. Regulates the expression of HDAC6, ATG7 and VCP in a PPIA/CYPA-dependent manner. This chain is TAR DNA-binding protein 43, found in Homo sapiens (Human).